Consider the following 384-residue polypeptide: NAD-capped RNA hydrolase NPY1 (384 aa).

The Zn(2+) site is built by cysteine 179, cysteine 182, cysteine 197, and cysteine 206. One can recognise a Nudix hydrolase domain in the interval 219-351; the sequence is PRTDPTVIIA…AGGYRVPFKN (133 aa). Mg(2+) contacts are provided by alanine 256, glutamate 272, glutamate 276, and glutamate 322. Substrate contacts are provided by residues 256 to 258, glutamate 272, glutamate 276, and glutamate 322; that span reads AGF. The short motif at 257–278 is the Nudix box element; the sequence is GFMEPSETIEEACIREIWEETG. A Microbody targeting signal motif is present at residues 378-380; it reads KTS.

The protein belongs to the Nudix hydrolase family. NudC subfamily. In terms of assembly, homodimer. Requires Mg(2+) as cofactor. The cofactor is Zn(2+).

The protein resides in the peroxisome. The catalysed reaction is a 5'-end NAD(+)-phospho-ribonucleoside in mRNA + H2O = a 5'-end phospho-adenosine-phospho-ribonucleoside in mRNA + beta-nicotinamide D-ribonucleotide + 2 H(+). The enzyme catalyses NAD(+) + H2O = beta-nicotinamide D-ribonucleotide + AMP + 2 H(+). It catalyses the reaction NADH + H2O = reduced beta-nicotinamide D-ribonucleotide + AMP + 2 H(+). Its function is as follows. mRNA decapping enzyme that specifically removes the nicotinamide adenine dinucleotide (NAD) cap from a subset of mRNAs by hydrolyzing the diphosphate linkage to produce nicotinamide mononucleotide (NMN) and 5' monophosphate mRNA. The NAD-cap is present at the 5'-end of some RNAs; in contrast to the canonical N7 methylguanosine (m7G) cap, the NAD cap promotes mRNA decay. Mediates the hydrolysis of some nucleoside diphosphate derivatives. The chain is NAD-capped RNA hydrolase NPY1 from Saccharomyces cerevisiae (strain ATCC 204508 / S288c) (Baker's yeast).